A 310-amino-acid chain; its full sequence is Integrin-binding sialoprotein (310 aa).

Residues 1–16 form the signal peptide; sequence MKTVLILLSILGMACA. Residues Ser-31, Ser-62, Ser-67, Ser-75, Ser-76, Ser-98, and Ser-106 each carry the phosphoserine modification. Residues 61–284 are disordered; the sequence is QSSSDSSEEN…NGDPRGDNYR (224 aa). Low complexity predominate over residues 62-74; it reads SSSDSSEENGNGD. 2 stretches are compositionally biased toward acidic residues: residues 75 to 87 and 96 to 108; these read SSEEEEEEEETSN and EDSDENEDEESEA. Asn-110 carries an N-linked (GlcNAc...) asparagine glycan. Thr-144 carries the phosphothreonine modification. Residues 152–174 are compositionally biased toward acidic residues; it reads DESDEEEEEEEEEENEAEVDDNE. Residue Ser-154 is modified to Phosphoserine. A compositionally biased stretch (polar residues) spans 175–187; sequence QGINGTSSNSTEV. Asn-178 and Asn-183 each carry an N-linked (GlcNAc...) asparagine glycan. Residues 198-208 show a composition bias toward acidic residues; it reads NGEEDGEEESV. Polar residues predominate over residues 209-227; sequence TEANTEGITVAGETTTSPN. Residue Ser-273 is modified to Phosphoserine. Residues 279 to 281 carry the Integrin-binding motif motif; that stretch reads RGD. Position 300 is a phosphoserine (Ser-300). Sulfotyrosine is present on residues Tyr-306 and Tyr-307.

As to quaternary structure, monomer. Interacts with integrins; the interaction promotes cell adhesion.

The protein localises to the secreted. Its function is as follows. Binds tightly to hydroxyapatite. Appears to form an integral part of the mineralized matrix. Probably important to cell-matrix interaction. Promotes adhesion and migration of various cells via the alpha-V/beta-3 integrin receptor (ITGAV:ITGB3). The chain is Integrin-binding sialoprotein (IBSP) from Bos taurus (Bovine).